The primary structure comprises 899 residues: Linoleate 13S-lipoxygenase 2-1, chloroplastic (899 aa).

The N-terminal 40 residues, 1 to 40, are a transit peptide targeting the chloroplast; sequence MLKPQLQQSSQSTKALIPSWNTNPLFLASFPINILNKNFR. A PLAT domain is found at 78–200; sequence VQKQVNLNLS…DNPDKRIFFT (123 aa). The 697-residue stretch at 203-899 folds into the Lipoxygenase domain; the sequence is SYLPSQTPSG…GKGVPYSISI (697 aa). Residues 252-287 are disordered; that stretch reads SNNDDAKRPVLGGKELPYPRRCKTGRPRSKKDPLSE. The span at 271–280 shows a compositional bias: basic residues; the sequence is RRCKTGRPRS. Fe cation is bound by residues histidine 557, histidine 562, histidine 749, asparagine 753, and isoleucine 899.

Belongs to the lipoxygenase family. Monomer. It depends on Fe cation as a cofactor. In terms of tissue distribution, expressed in leaves and floral buds.

It localises to the plastid. The protein localises to the chloroplast stroma. The protein resides in the chloroplast thylakoid. The catalysed reaction is (9Z,12Z)-octadecadienoate + O2 = (13S)-hydroperoxy-(9Z,11E)-octadecadienoate. It catalyses the reaction (9Z,12Z,15Z)-octadecatrienoate + O2 = (13S)-hydroperoxy-(9Z,11E,15Z)-octadecatrienoate. Its pathway is lipid metabolism; oxylipin biosynthesis. In terms of biological role, plant lipoxygenase involved in a number of diverse aspects of plant physiology including growth and development, pest resistance, and senescence. May not be involved in the bulk production of jasmonate upon wounding. Catalyzes the hydroperoxidation of lipids containing a cis,cis-1,4-pentadiene structure. Linolenic acid is the preferred substrate, before linoleic and arachidonic acids. Also has some activity with phosphatidylglycerol, but not with galactolipids. This Solanum tuberosum (Potato) protein is Linoleate 13S-lipoxygenase 2-1, chloroplastic.